The sequence spans 513 residues: Voltage-gated potassium channel regulatory subunit KCNG1 (513 aa).

At 1–224 the chain is on the cytoplasmic side; it reads MTLLPGDNSD…DMVERPHSGL (224 aa). The disordered stretch occupies residues 184–204; that stretch reads EEDDALDSEGRDSEGPAEGEG. The segment covering 191 to 204 has biased composition (basic and acidic residues); that stretch reads SEGRDSEGPAEGEG. The chain crosses the membrane as a helical span at residues 225–246; it reads PGKVFACLSVLFVTVTAVNLSV. Topologically, residues 247-267 are extracellular; it reads STLPSLREEEEQGHCSQMCHN. The chain crosses the membrane as a helical span at residues 268-289; it reads VFIVESVCVGWFSLEFLLRLIQ. Residues 290 to 300 lie on the Cytoplasmic side of the membrane; sequence APSKFAFLRSP. A helical membrane pass occupies residues 301–321; the sequence is LTLIDLVAILPYYITLLVDGA. The Extracellular portion of the chain corresponds to 322-338; the sequence is AAGRRKPGAGNSYLDKV. Residues 339–359 form a helical; Voltage-sensor membrane-spanning segment; the sequence is GLVLRVLRALRILYVMRLARH. Residues 360–374 are Cytoplasmic-facing; it reads SLGLQTLGLTARRCT. Residues 375–396 form a helical membrane-spanning segment; it reads REFGLLLLFLCVAIALFAPLLY. At 397–411 the chain is on the extracellular side; that stretch reads VIENEMADSPEFTSI. Residues 412 to 423 constitute an intramembrane region (helical); the sequence is PACYWWAVITMT. Residues 424 to 429 carry the Selectivity filter motif; sequence TVGYGD. The stretch at 424 to 431 is an intramembrane region; sequence TVGYGDMV. Topologically, residues 432–438 are extracellular; sequence PRSTPGQ. The chain crosses the membrane as a helical span at residues 439 to 467; it reads VVALSSILSGILLMAFPVTSIFHTFSRSY. The Cytoplasmic portion of the chain corresponds to 468–513; the sequence is LELKQEQERVMFRRAQFLIKTKSQLSVSQDSDILFGSASSDTRDNN.

The protein belongs to the potassium channel family. G (TC 1.A.1.2) subfamily. Kv6.1/KCNG1 sub-subfamily. As to quaternary structure, heterotetramer with KCNB1. Heterotetramer with KCNB2. In terms of tissue distribution, expressed in brain and placenta, and at much lower levels in kidney and pancreas.

It is found in the cell membrane. In terms of biological role, regulatory alpha-subunit of the voltage-gated potassium (Kv) channel which, when coassembled with KCNB1 or KCNB2, can modulate their expression and their gating kinetics by acting on deactivation upon repolarization and inactivation during maintained depolarization. Potassium channel subunit that does not form functional channels by itself. This Homo sapiens (Human) protein is Voltage-gated potassium channel regulatory subunit KCNG1.